A 245-amino-acid polypeptide reads, in one-letter code: Orotidine 5'-phosphate decarboxylase (245 aa).

Substrate-binding positions include Asp-22, Lys-44, 71-80 (DLKFHDIPNT), Thr-131, Arg-192, Gln-201, Gly-221, and Arg-222. Lys-73 functions as the Proton donor in the catalytic mechanism.

It belongs to the OMP decarboxylase family. Type 1 subfamily. Homodimer.

The enzyme catalyses orotidine 5'-phosphate + H(+) = UMP + CO2. Its pathway is pyrimidine metabolism; UMP biosynthesis via de novo pathway; UMP from orotate: step 2/2. Its function is as follows. Catalyzes the decarboxylation of orotidine 5'-monophosphate (OMP) to uridine 5'-monophosphate (UMP). This chain is Orotidine 5'-phosphate decarboxylase, found in Yersinia pseudotuberculosis serotype O:1b (strain IP 31758).